A 429-amino-acid polypeptide reads, in one-letter code: Ribosomal RNA small subunit methyltransferase B (429 aa).

S-adenosyl-L-methionine contacts are provided by residues 254–260 (CAAPGGK), Asp-277, Asp-303, and Asp-322. The Nucleophile role is filled by Cys-375.

This sequence belongs to the class I-like SAM-binding methyltransferase superfamily. RsmB/NOP family.

Its subcellular location is the cytoplasm. The catalysed reaction is cytidine(967) in 16S rRNA + S-adenosyl-L-methionine = 5-methylcytidine(967) in 16S rRNA + S-adenosyl-L-homocysteine + H(+). Specifically methylates the cytosine at position 967 (m5C967) of 16S rRNA. In Pectobacterium atrosepticum (strain SCRI 1043 / ATCC BAA-672) (Erwinia carotovora subsp. atroseptica), this protein is Ribosomal RNA small subunit methyltransferase B.